Here is a 309-residue protein sequence, read N- to C-terminus: Olfactory receptor 5AC2 (309 aa).

The Extracellular portion of the chain corresponds to 1–27 (MDISEGNKTLVTEFVLTGLTDRPWLHV). N-linked (GlcNAc...) asparagine glycosylation occurs at Asn7. The helical transmembrane segment at 28 to 48 (LFFVVFLVVYLITMVGNLGLI) threads the bilayer. Topologically, residues 49–56 (VLIWNDPH) are cytoplasmic. A helical membrane pass occupies residues 57–77 (LHMPMYLFLGGLAFSDACTST). Topologically, residues 78–101 (SITPRMLVNFLDKTAMISLAECIT) are extracellular. Cys99 and Cys191 are disulfide-bonded. A helical membrane pass occupies residues 102–122 (QFYFFASSATTECFLLVMMAY). At 123-135 (DRYVAICNPLLYP) the chain is on the cytoplasmic side. A helical membrane pass occupies residues 136-156 (VMMSNKLSAQLLSISYVIGFL). The Extracellular portion of the chain corresponds to 157-198 (HPLVHVSLLLRLTFCRFNIIHYFYCEILQLFKISCNGPSINA). The chain crosses the membrane as a helical span at residues 199–219 (LMIFIFGAFIQIPTLMTIIIS). Topologically, residues 220–239 (YTRVLFDILKKKSEKGRSKA) are cytoplasmic. Residues 240-260 (FSTCGAHLLSVSLYYGTLIFM) form a helical membrane-spanning segment. At 261–273 (YVRPASGLAEDQD) the chain is on the extracellular side. The helical transmembrane segment at 274-294 (KVYSLFYTIIIPLLNPFIYSL) threads the bilayer. Over 295 to 309 (RNKKVMHALRRVIRK) the chain is Cytoplasmic.

This sequence belongs to the G-protein coupled receptor 1 family.

Its subcellular location is the cell membrane. Odorant receptor. This chain is Olfactory receptor 5AC2 (OR5AC2), found in Homo sapiens (Human).